The chain runs to 486 residues: Siroheme synthase (486 aa).

The segment at 1 to 204 (MNYLPIFVDL…HQIEQAEALV (204 aa)) is precorrin-2 dehydrogenase /sirohydrochlorin ferrochelatase. NAD(+)-binding positions include 22–23 (HI) and 43–44 (EK). Ser-128 carries the phosphoserine modification. The interval 216–486 (GEVSLVGAGP…NKETHWKQAA (271 aa)) is uroporphyrinogen-III C-methyltransferase. Pro-225 serves as a coordination point for S-adenosyl-L-methionine. Asp-248 functions as the Proton acceptor in the catalytic mechanism. Catalysis depends on Lys-270, which acts as the Proton donor. Residues 301 to 303 (GGD), Val-306, 331 to 332 (TA), Met-383, and Gly-412 contribute to the S-adenosyl-L-methionine site.

The protein in the N-terminal section; belongs to the precorrin-2 dehydrogenase / sirohydrochlorin ferrochelatase family. This sequence in the C-terminal section; belongs to the precorrin methyltransferase family.

The catalysed reaction is uroporphyrinogen III + 2 S-adenosyl-L-methionine = precorrin-2 + 2 S-adenosyl-L-homocysteine + H(+). It carries out the reaction precorrin-2 + NAD(+) = sirohydrochlorin + NADH + 2 H(+). It catalyses the reaction siroheme + 2 H(+) = sirohydrochlorin + Fe(2+). Its pathway is cofactor biosynthesis; adenosylcobalamin biosynthesis; precorrin-2 from uroporphyrinogen III: step 1/1. The protein operates within cofactor biosynthesis; adenosylcobalamin biosynthesis; sirohydrochlorin from precorrin-2: step 1/1. It participates in porphyrin-containing compound metabolism; siroheme biosynthesis; precorrin-2 from uroporphyrinogen III: step 1/1. It functions in the pathway porphyrin-containing compound metabolism; siroheme biosynthesis; siroheme from sirohydrochlorin: step 1/1. Its pathway is porphyrin-containing compound metabolism; siroheme biosynthesis; sirohydrochlorin from precorrin-2: step 1/1. Functionally, multifunctional enzyme that catalyzes the SAM-dependent methylations of uroporphyrinogen III at position C-2 and C-7 to form precorrin-2 via precorrin-1. Then it catalyzes the NAD-dependent ring dehydrogenation of precorrin-2 to yield sirohydrochlorin. Finally, it catalyzes the ferrochelation of sirohydrochlorin to yield siroheme. The protein is Siroheme synthase of Actinobacillus pleuropneumoniae serotype 3 (strain JL03).